The chain runs to 508 residues: Histidine ammonia-lyase (508 aa).

Positions 143 to 145 (ASG) form a cross-link, 5-imidazolinone (Ala-Gly). A 2,3-didehydroalanine (Ser) modification is found at serine 144.

Belongs to the PAL/histidase family. Contains an active site 4-methylidene-imidazol-5-one (MIO), which is formed autocatalytically by cyclization and dehydration of residues Ala-Ser-Gly.

Its subcellular location is the cytoplasm. The enzyme catalyses L-histidine = trans-urocanate + NH4(+). Its pathway is amino-acid degradation; L-histidine degradation into L-glutamate; N-formimidoyl-L-glutamate from L-histidine: step 1/3. In Klebsiella pneumoniae subsp. pneumoniae (strain ATCC 700721 / MGH 78578), this protein is Histidine ammonia-lyase.